Reading from the N-terminus, the 257-residue chain is NAD-capped RNA hydrolase NudC (257 aa).

Arg-69 is a binding site for substrate. 2 residues coordinate Zn(2+): Cys-98 and Cys-101. Substrate is bound at residue Glu-111. Zn(2+) contacts are provided by Cys-116 and Cys-119. Tyr-124 serves as a coordination point for substrate. Residues 125–248 (PQIAPCIIVA…TVARRLIEDT (124 aa)) form the Nudix hydrolase domain. Ala-158, Glu-174, and Glu-178 together coordinate a divalent metal cation. The Nudix box signature appears at 159 to 180 (GFVEVGETLEQAVAREVMEESG). 192 to 199 (QPWPFPQS) is a binding site for substrate. Glu-219 contributes to the a divalent metal cation binding site. Ala-241 provides a ligand contact to substrate.

It belongs to the Nudix hydrolase family. NudC subfamily. In terms of assembly, homodimer. Mg(2+) is required as a cofactor. Mn(2+) serves as cofactor. Requires Zn(2+) as cofactor.

It carries out the reaction a 5'-end NAD(+)-phospho-ribonucleoside in mRNA + H2O = a 5'-end phospho-adenosine-phospho-ribonucleoside in mRNA + beta-nicotinamide D-ribonucleotide + 2 H(+). The catalysed reaction is NAD(+) + H2O = beta-nicotinamide D-ribonucleotide + AMP + 2 H(+). It catalyses the reaction NADH + H2O = reduced beta-nicotinamide D-ribonucleotide + AMP + 2 H(+). In terms of biological role, mRNA decapping enzyme that specifically removes the nicotinamide adenine dinucleotide (NAD) cap from a subset of mRNAs by hydrolyzing the diphosphate linkage to produce nicotinamide mononucleotide (NMN) and 5' monophosphate mRNA. The NAD-cap is present at the 5'-end of some mRNAs and stabilizes RNA against 5'-processing. Has preference for mRNAs with a 5'-end purine. Catalyzes the hydrolysis of a broad range of dinucleotide pyrophosphates. In Salmonella agona (strain SL483), this protein is NAD-capped RNA hydrolase NudC.